Here is a 465-residue protein sequence, read N- to C-terminus: 5-cytosine rRNA methyltransferase nsun-4 (465 aa).

The transit peptide at 1-6 directs the protein to the mitochondrion; it reads MSCLRQ. The segment covering 106 to 130 has biased composition (basic and acidic residues); that stretch reads QAIETKRKSVEEKANRETQKVKHEI. Positions 106–145 are disordered; that stretch reads QAIETKRKSVEEKANRETQKVKHEISNPSTSTNTEDSEPD. S-adenosyl-L-methionine contacts are provided by residues 260 to 266, D283, D316, and D335; that span reads CAAPGGK. C390 serves as the catalytic Nucleophile.

This sequence belongs to the class I-like SAM-binding methyltransferase superfamily. RsmB/NOP family.

Its subcellular location is the mitochondrion. It catalyses the reaction a cytidine in rRNA + S-adenosyl-L-methionine = a 5-methylcytidine in rRNA + S-adenosyl-L-homocysteine + H(+). The catalysed reaction is a cytidine in tRNA + S-adenosyl-L-methionine = a 5-methylcytidine in tRNA + S-adenosyl-L-homocysteine + H(+). Functionally, mitochondrial methyltransferase which methylates cytosine to 5-methylcytosine (m5C) in rRNAs and tRNAs at multiple sites. May play a role in the translation of leucine and proline codons. The sequence is that of 5-cytosine rRNA methyltransferase nsun-4 from Caenorhabditis elegans.